The following is a 117-amino-acid chain: Large ribosomal subunit protein bL19 (117 aa).

Belongs to the bacterial ribosomal protein bL19 family.

This protein is located at the 30S-50S ribosomal subunit interface and may play a role in the structure and function of the aminoacyl-tRNA binding site. This Thermotoga neapolitana (strain ATCC 49049 / DSM 4359 / NBRC 107923 / NS-E) protein is Large ribosomal subunit protein bL19.